A 166-amino-acid chain; its full sequence is PTS system glucose-specific EIIA component (166 aa).

The 105-residue stretch at 34–138 folds into the PTS EIIA type-1 domain; it reads DPVFAQKMMG…SVISPIIITN (105 aa). Zn(2+) is bound by residues His71 and His86. His86 acts as the Tele-phosphohistidine intermediate; for EIIA activity in catalysis. His86 is subject to Phosphohistidine; by HPr.

As to quaternary structure, heterodimer with glycerol kinase (glpk). The cofactor is Zn(2+).

Its subcellular location is the cytoplasm. Functionally, the phosphoenolpyruvate-dependent sugar phosphotransferase system (sugar PTS), a major carbohydrate active transport system, catalyzes the phosphorylation of incoming sugar substrates concomitantly with their translocation across the cell membrane. The enzyme II complex composed of PtsG and Crr is involved in glucose transport. The protein is PTS system glucose-specific EIIA component (crr) of Staphylococcus aureus (strain COL).